Reading from the N-terminus, the 438-residue chain is Fumarate hydratase class II (438 aa).

Substrate-binding positions include 76 to 78 (SGT), 101 to 104 (HPND), 111 to 113 (SSN), and Thr159. His160 serves as the catalytic Proton donor/acceptor. Residue Ser291 is part of the active site. Substrate contacts are provided by residues Ser292 and 297 to 299 (KTN).

It belongs to the class-II fumarase/aspartase family. Fumarase subfamily. Homotetramer.

It is found in the cytoplasm. It catalyses the reaction (S)-malate = fumarate + H2O. It functions in the pathway carbohydrate metabolism; tricarboxylic acid cycle; (S)-malate from fumarate: step 1/1. In terms of biological role, involved in the TCA cycle. Catalyzes the stereospecific interconversion of fumarate to L-malate. The protein is Fumarate hydratase class II of Saccharolobus solfataricus (strain ATCC 35092 / DSM 1617 / JCM 11322 / P2) (Sulfolobus solfataricus).